The sequence spans 494 residues: Aspartyl/glutamyl-tRNA(Asn/Gln) amidotransferase subunit B (494 aa).

The protein belongs to the GatB/GatE family. GatB subfamily. Heterotrimer of A, B and C subunits.

The catalysed reaction is L-glutamyl-tRNA(Gln) + L-glutamine + ATP + H2O = L-glutaminyl-tRNA(Gln) + L-glutamate + ADP + phosphate + H(+). The enzyme catalyses L-aspartyl-tRNA(Asn) + L-glutamine + ATP + H2O = L-asparaginyl-tRNA(Asn) + L-glutamate + ADP + phosphate + 2 H(+). Its function is as follows. Allows the formation of correctly charged Asn-tRNA(Asn) or Gln-tRNA(Gln) through the transamidation of misacylated Asp-tRNA(Asn) or Glu-tRNA(Gln) in organisms which lack either or both of asparaginyl-tRNA or glutaminyl-tRNA synthetases. The reaction takes place in the presence of glutamine and ATP through an activated phospho-Asp-tRNA(Asn) or phospho-Glu-tRNA(Gln). The protein is Aspartyl/glutamyl-tRNA(Asn/Gln) amidotransferase subunit B of Rhodopseudomonas palustris (strain HaA2).